Consider the following 113-residue polypeptide: uncharacterized protein (113 aa).

It is found in the cytoplasm. The protein resides in the nucleus. This is an uncharacterized protein from Saccharomyces cerevisiae (strain ATCC 204508 / S288c) (Baker's yeast).